We begin with the raw amino-acid sequence, 959 residues long: Isoleucine--tRNA ligase (959 aa).

The 'HIGH' region signature appears at 60-70 (PYANGSLHIGH). Residue E571 participates in L-isoleucyl-5'-AMP binding. A 'KMSKS' region motif is present at residues 612-616 (KMSKS). An ATP-binding site is contributed by K615. The Zn(2+) site is built by C928, C931, C948, and C951.

Belongs to the class-I aminoacyl-tRNA synthetase family. IleS type 1 subfamily. As to quaternary structure, monomer. Requires Zn(2+) as cofactor.

It localises to the cytoplasm. The catalysed reaction is tRNA(Ile) + L-isoleucine + ATP = L-isoleucyl-tRNA(Ile) + AMP + diphosphate. In terms of biological role, catalyzes the attachment of isoleucine to tRNA(Ile). As IleRS can inadvertently accommodate and process structurally similar amino acids such as valine, to avoid such errors it has two additional distinct tRNA(Ile)-dependent editing activities. One activity is designated as 'pretransfer' editing and involves the hydrolysis of activated Val-AMP. The other activity is designated 'posttransfer' editing and involves deacylation of mischarged Val-tRNA(Ile). This chain is Isoleucine--tRNA ligase, found in Nostoc punctiforme (strain ATCC 29133 / PCC 73102).